The primary structure comprises 478 residues: Protein ZINC INDUCED FACILITATOR-LIKE 1 (478 aa).

Transmembrane regions (helical) follow at residues 43–63 (IIVLCTALPISSLFPFLYFMI), 81–101 (FVGCSFMLGRAFTSVAWGLVA), 108–128 (PVILIGTASVVVFNTLFGLSL), 130–150 (FWMAIITRFCLGSFNGLLGPI), 169–189 (AVSTAWGIGLIIGPAIGGFLA), 208–228 (FPFFLPCLAISVFAFLVTIVS), 280–300 (IIVYCVFSLHDMAYTEIFSLW), 317–337 (VGSVLAFSGFGLLIFQLSLYS), 346–367 (IIVTRISGSLAMVVLSCYPLIA), 378–398 (VTSASVAKSVLGTSAITGLFI), 415–435 (IAMTAMSLFKAIGPAAAGIIF), and 453–473 (VFFILNVVLALGVVLTFKPFL).

It belongs to the major facilitator superfamily. As to expression, predominantly expressed in roots and stomatal guard cells. Detected in anther stamen filaments and shoot apical meristem. In the mature portion of roots, restricted to the cortex. At the root tip, highly expressed in both the cortical and epidermal cell layers of the apical meristem and the transition zone, while absent from the quiescent center or the columella cells. Not detected in lateral root primordia.

It localises to the cell membrane. It is found in the vacuole membrane. In terms of biological role, major facilitator superfamily (MFS) transporter probably involved in 2,4-dichlorophenoxyacetic acid (2,4-D) export. K(+) may be the physiological substrate of the transporter. Functionally, modulates root auxin-related processes. Involved in auxin efflux and acts as a positive regulator of shootward transport at the root apex. May mediate proton efflux from the vacuolar compartment. Its function is as follows. Mediates drought stress tolerance by regulating stomatal closure. The polypeptide is Protein ZINC INDUCED FACILITATOR-LIKE 1 (ZIFL1) (Arabidopsis thaliana (Mouse-ear cress)).